The sequence spans 261 residues: Cytochrome c oxidase subunit 3 (261 aa).

At 1–15 (MTHQTHAYHMVNPSP) the chain is on the mitochondrial matrix side. A helical transmembrane segment spans residues 16 to 34 (WPLTGALSALLMTSGLTMW). The Mitochondrial intermembrane portion of the chain corresponds to 35-40 (FHYNST). The chain crosses the membrane as a helical span at residues 41-66 (ILLMLGLTTNMLTMYQWWRDIIREST). Topologically, residues 67-72 (FQGHHT) are mitochondrial matrix. The helical transmembrane segment at 73–105 (PTVQKGLRYGMILFIISEVLFFTGFFWAFYHSS) threads the bilayer. Topologically, residues 106-128 (LAPTPELGGCWPPTGIHPLNPLE) are mitochondrial intermembrane. Residues 129–152 (VPLLNTSVLLASGVSITWAHHSLM) form a helical membrane-spanning segment. The Mitochondrial matrix segment spans residues 153 to 155 (EGD). A helical transmembrane segment spans residues 156–183 (RNHMLQALFITIALGIYFTLLQASEYYE). The Mitochondrial intermembrane portion of the chain corresponds to 184–190 (APFTISD). The helical transmembrane segment at 191-223 (GVYGSTFFVATGFHGLHVIIGSTFLIVCFFRQL) threads the bilayer. Residues 224–232 (KFHFTSSHH) are Mitochondrial matrix-facing. Residues 233-256 (FGFEAAAWYWHFVDVVWLFLYVSI) traverse the membrane as a helical segment. The Mitochondrial intermembrane portion of the chain corresponds to 257–261 (YWWGS).

The protein belongs to the cytochrome c oxidase subunit 3 family. As to quaternary structure, component of the cytochrome c oxidase (complex IV, CIV), a multisubunit enzyme composed of 14 subunits. The complex is composed of a catalytic core of 3 subunits MT-CO1, MT-CO2 and MT-CO3, encoded in the mitochondrial DNA, and 11 supernumerary subunits COX4I, COX5A, COX5B, COX6A, COX6B, COX6C, COX7A, COX7B, COX7C, COX8 and NDUFA4, which are encoded in the nuclear genome. The complex exists as a monomer or a dimer and forms supercomplexes (SCs) in the inner mitochondrial membrane with NADH-ubiquinone oxidoreductase (complex I, CI) and ubiquinol-cytochrome c oxidoreductase (cytochrome b-c1 complex, complex III, CIII), resulting in different assemblies (supercomplex SCI(1)III(2)IV(1) and megacomplex MCI(2)III(2)IV(2)).

It is found in the mitochondrion inner membrane. The enzyme catalyses 4 Fe(II)-[cytochrome c] + O2 + 8 H(+)(in) = 4 Fe(III)-[cytochrome c] + 2 H2O + 4 H(+)(out). In terms of biological role, component of the cytochrome c oxidase, the last enzyme in the mitochondrial electron transport chain which drives oxidative phosphorylation. The respiratory chain contains 3 multisubunit complexes succinate dehydrogenase (complex II, CII), ubiquinol-cytochrome c oxidoreductase (cytochrome b-c1 complex, complex III, CIII) and cytochrome c oxidase (complex IV, CIV), that cooperate to transfer electrons derived from NADH and succinate to molecular oxygen, creating an electrochemical gradient over the inner membrane that drives transmembrane transport and the ATP synthase. Cytochrome c oxidase is the component of the respiratory chain that catalyzes the reduction of oxygen to water. Electrons originating from reduced cytochrome c in the intermembrane space (IMS) are transferred via the dinuclear copper A center (CU(A)) of subunit 2 and heme A of subunit 1 to the active site in subunit 1, a binuclear center (BNC) formed by heme A3 and copper B (CU(B)). The BNC reduces molecular oxygen to 2 water molecules using 4 electrons from cytochrome c in the IMS and 4 protons from the mitochondrial matrix. This chain is Cytochrome c oxidase subunit 3 (MT-CO3), found in Tragelaphus imberbis (Lesser kudu).